A 963-amino-acid polypeptide reads, in one-letter code: Putative RNA Helicase B962L (963 aa).

The Helicase ATP-binding domain maps to I43–L229. Residue S56–S63 coordinates ATP. The short motif at D167–H170 is the DEAH box element. Positions A253–F459 constitute a Helicase C-terminal domain. A helical transmembrane segment spans residues G521 to V541.

It belongs to the DEAD box helicase family. DEAH subfamily.

It localises to the host membrane. The protein resides in the virion. The catalysed reaction is ATP + H2O = ADP + phosphate + H(+). This Ornithodoros (relapsing fever ticks) protein is Putative RNA Helicase B962L.